Consider the following 317-residue polypeptide: Aspartate carbamoyltransferase catalytic subunit (317 aa).

Positions 64 and 65 each coordinate carbamoyl phosphate. L-aspartate is bound at residue K92. R114, H144, and Q147 together coordinate carbamoyl phosphate. L-aspartate contacts are provided by R177 and R232. The carbamoyl phosphate site is built by G273 and P274.

This sequence belongs to the aspartate/ornithine carbamoyltransferase superfamily. ATCase family. As to quaternary structure, heterododecamer (2C3:3R2) of six catalytic PyrB chains organized as two trimers (C3), and six regulatory PyrI chains organized as three dimers (R2).

The enzyme catalyses carbamoyl phosphate + L-aspartate = N-carbamoyl-L-aspartate + phosphate + H(+). It participates in pyrimidine metabolism; UMP biosynthesis via de novo pathway; (S)-dihydroorotate from bicarbonate: step 2/3. Functionally, catalyzes the condensation of carbamoyl phosphate and aspartate to form carbamoyl aspartate and inorganic phosphate, the committed step in the de novo pyrimidine nucleotide biosynthesis pathway. This chain is Aspartate carbamoyltransferase catalytic subunit, found in Thiobacillus denitrificans (strain ATCC 25259 / T1).